A 121-amino-acid polypeptide reads, in one-letter code: Large ribosomal subunit protein bL20 (121 aa).

The protein belongs to the bacterial ribosomal protein bL20 family.

Its function is as follows. Binds directly to 23S ribosomal RNA and is necessary for the in vitro assembly process of the 50S ribosomal subunit. It is not involved in the protein synthesizing functions of that subunit. In Wolbachia sp. subsp. Drosophila simulans (strain wRi), this protein is Large ribosomal subunit protein bL20.